Here is a 101-residue protein sequence, read N- to C-terminus: Putative pterin-4-alpha-carbinolamine dehydratase (101 aa).

It belongs to the pterin-4-alpha-carbinolamine dehydratase family.

The enzyme catalyses (4aS,6R)-4a-hydroxy-L-erythro-5,6,7,8-tetrahydrobiopterin = (6R)-L-erythro-6,7-dihydrobiopterin + H2O. The chain is Putative pterin-4-alpha-carbinolamine dehydratase from Rhodopseudomonas palustris (strain BisB18).